The following is a 485-amino-acid chain: Envelope glycoprotein C (485 aa).

The signal sequence occupies residues 1–32 (MGLVNIMRFITFAYIICGGFILTRTSGTSASA). A compositionally biased stretch (low complexity) spans 28 to 72 (TSASASPATPTTNTGEGTSSPVTPTYTTSTDSNNSTATNNSTDVN). A disordered region spans residues 28–88 (TSASASPATP…TPSHPHSHEN (61 aa)). Over 33–444 (SPATPTTNTG…DASPIVEDMP (412 aa)) the chain is Virion surface. 11 N-linked (GlcNAc...) asparagine; by host glycosylation sites follow: N60, N61, N66, N67, N72, N108, N116, N147, N220, N225, and N286. C92 and C109 are oxidised to a cystine. Residues 237-330 (PLMDLSVHPS…EWYRDEVSFS (94 aa)) form the Ig-like domain. 3 cysteine pairs are disulfide-bonded: C256–C318, C357–C416, and C361–C390. A helical transmembrane segment spans residues 445–468 (VLTGIIAVTCGAAALALVVLITAV). Topologically, residues 469-485 (CFYCSKPSQVPYKKADF) are cytoplasmic.

It belongs to the herpesviridae glycoprotein C family. Interacts with host complement component C3; this interaction inhibits host immune response by disregulating complement cascade.

The protein resides in the virion membrane. Functionally, essential for the initial attachment to heparan sulfate moieties of the host cell surface proteoglycans. Also plays a role in host immune evasion by inhibiting the host complement cascade activation. This is Envelope glycoprotein C (gC) from Equine herpesvirus 4 (strain 1942) (EHV-4).